The primary structure comprises 159 residues: MNISIISVGKIKEKFLKAAIDEYSKRLSKYCKLNIIEVPDEKTPDNASLKEENIIKEKEGTLILKHIKDNSFVIALDLKGKSIASEEFSDLIENCRLTGNSTIAFVIGGSLGLSEQVLSRANYRLSFSKMTFPHQLFRVMLLEQVYRAFRILCREPYHK.

Residues leucine 76, glycine 108, and 127-132 contribute to the S-adenosyl-L-methionine site; that span reads FSKMTF.

Belongs to the RNA methyltransferase RlmH family. In terms of assembly, homodimer.

Its subcellular location is the cytoplasm. It carries out the reaction pseudouridine(1915) in 23S rRNA + S-adenosyl-L-methionine = N(3)-methylpseudouridine(1915) in 23S rRNA + S-adenosyl-L-homocysteine + H(+). In terms of biological role, specifically methylates the pseudouridine at position 1915 (m3Psi1915) in 23S rRNA. The chain is Ribosomal RNA large subunit methyltransferase H from Clostridium botulinum (strain 657 / Type Ba4).